A 508-amino-acid chain; its full sequence is Steroid 17-alpha-hydroxylase/17,20 lyase (508 aa).

Asn202 contacts substrate. Residue Cys442 coordinates heme.

The protein belongs to the cytochrome P450 family. Requires heme as cofactor.

It is found in the endoplasmic reticulum membrane. The protein localises to the microsome membrane. The enzyme catalyses a C21-steroid + reduced [NADPH--hemoprotein reductase] + O2 = a 17alpha-hydroxy-C21-steroid + oxidized [NADPH--hemoprotein reductase] + H2O + H(+). The catalysed reaction is progesterone + reduced [NADPH--hemoprotein reductase] + O2 = 17alpha-hydroxyprogesterone + oxidized [NADPH--hemoprotein reductase] + H2O + H(+). It carries out the reaction pregnenolone + reduced [NADPH--hemoprotein reductase] + O2 = 17alpha-hydroxypregnenolone + oxidized [NADPH--hemoprotein reductase] + H2O + H(+). It catalyses the reaction 17alpha-hydroxyprogesterone + reduced [NADPH--hemoprotein reductase] + O2 = androst-4-ene-3,17-dione + acetate + oxidized [NADPH--hemoprotein reductase] + H2O + 2 H(+). The enzyme catalyses 17alpha-hydroxyprogesterone + reduced [NADPH--hemoprotein reductase] + O2 = 16alpha,17alpha-dihydroxyprogesterone + oxidized [NADPH--hemoprotein reductase] + H2O + H(+). The catalysed reaction is 16alpha,17alpha-dihydroxyprogesterone + reduced [NADPH--hemoprotein reductase] + O2 = 6beta,16alpha,17alpha-trihydroxyprogesterone + oxidized [NADPH--hemoprotein reductase] + H2O + H(+). It carries out the reaction 17alpha-hydroxypregnenolone + reduced [NADPH--hemoprotein reductase] + O2 = 3beta-hydroxyandrost-5-en-17-one + acetate + oxidized [NADPH--hemoprotein reductase] + H2O + 2 H(+). It catalyses the reaction 16alpha,17alpha-dihydroxypregnenolone + reduced [NADPH--hemoprotein reductase] + O2 = 3beta,16alpha-dihydroxy-androst-5-en-17-one + acetate + oxidized [NADPH--hemoprotein reductase] + H2O + 2 H(+). The enzyme catalyses 3beta-hydroxyandrost-5-en-17-one + reduced [NADPH--hemoprotein reductase] + O2 = 3beta,16alpha-dihydroxy-androst-5-en-17-one + oxidized [NADPH--hemoprotein reductase] + H2O + H(+). The catalysed reaction is androst-4-ene-3,17-dione + reduced [NADPH--hemoprotein reductase] + O2 = 16alpha-hydroxyandrost-4-ene-3,17-dione + oxidized [NADPH--hemoprotein reductase] + H2O + H(+). It functions in the pathway steroid hormone biosynthesis. It participates in steroid biosynthesis; glucocorticoid biosynthesis. Its activity is regulated as follows. Regulated predominantly by intracellular cAMP levels. The 17,20-lyase activity is stimulated by cytochrome b5, which acts as an allosteric effector increasing the Vmax of the lyase activity. Functionally, a cytochrome P450 monooxygenase involved in corticoid and androgen biosynthesis. Catalyzes 17-alpha hydroxylation of C21 steroids, which is common for both pathways. A second oxidative step, required only for androgen synthesis, involves an acyl-carbon cleavage. The 17-alpha hydroxy intermediates, as part of adrenal glucocorticoids biosynthesis pathway, are precursors of cortisol. Hydroxylates steroid hormones, pregnenolone and progesterone to form 17-alpha hydroxy metabolites, followed by the cleavage of the C17-C20 bond to form C19 steroids, dehydroepiandrosterone (DHEA) and androstenedione. Has 16-alpha hydroxylase activity. Catalyzes 16-alpha hydroxylation of 17-alpha hydroxy pregnenolone, followed by the cleavage of the C17-C20 bond to form 16-alpha-hydroxy DHEA. Also 16-alpha hydroxylates androgens, relevant for estriol synthesis. Mechanistically, uses molecular oxygen inserting one oxygen atom into a substrate, and reducing the second into a water molecule, with two electrons provided by NADPH via cytochrome P450 reductase (CPR; NADPH-ferrihemoprotein reductase). The sequence is that of Steroid 17-alpha-hydroxylase/17,20 lyase (CYP17A1) from Papio cynocephalus (Yellow baboon).